The sequence spans 200 residues: Large ribosomal subunit protein uL4 (200 aa).

Residues 43-71 form a disordered region; that stretch reads RAQKTRAEVSGSGKKPWRQKGTGRARSGD.

This sequence belongs to the universal ribosomal protein uL4 family. As to quaternary structure, part of the 50S ribosomal subunit.

Its function is as follows. One of the primary rRNA binding proteins, this protein initially binds near the 5'-end of the 23S rRNA. It is important during the early stages of 50S assembly. It makes multiple contacts with different domains of the 23S rRNA in the assembled 50S subunit and ribosome. Forms part of the polypeptide exit tunnel. The protein is Large ribosomal subunit protein uL4 of Histophilus somni (strain 2336) (Haemophilus somnus).